The primary structure comprises 1405 residues: DNA-directed RNA polymerase subunit beta' (1405 aa).

Residues cysteine 70, cysteine 72, cysteine 85, and cysteine 88 each coordinate Zn(2+). Mg(2+)-binding residues include aspartate 460, aspartate 462, and aspartate 464. The Zn(2+) site is built by cysteine 815, cysteine 890, cysteine 897, and cysteine 900.

Belongs to the RNA polymerase beta' chain family. The RNAP catalytic core consists of 2 alpha, 1 beta, 1 beta' and 1 omega subunit. When a sigma factor is associated with the core the holoenzyme is formed, which can initiate transcription. Requires Mg(2+) as cofactor. Zn(2+) is required as a cofactor.

The enzyme catalyses RNA(n) + a ribonucleoside 5'-triphosphate = RNA(n+1) + diphosphate. Functionally, DNA-dependent RNA polymerase catalyzes the transcription of DNA into RNA using the four ribonucleoside triphosphates as substrates. In Xanthomonas campestris pv. campestris (strain 8004), this protein is DNA-directed RNA polymerase subunit beta'.